Consider the following 599-residue polypeptide: Elongation factor 4 (599 aa).

In terms of domain architecture, tr-type G spans 2-184; that stretch reads KNIRNFSIIA…EIVAKIPAPK (183 aa). GTP contacts are provided by residues 14 to 19 and 131 to 134; these read DHGKST and NKID.

Belongs to the TRAFAC class translation factor GTPase superfamily. Classic translation factor GTPase family. LepA subfamily.

The protein resides in the cell inner membrane. The catalysed reaction is GTP + H2O = GDP + phosphate + H(+). Required for accurate and efficient protein synthesis under certain stress conditions. May act as a fidelity factor of the translation reaction, by catalyzing a one-codon backward translocation of tRNAs on improperly translocated ribosomes. Back-translocation proceeds from a post-translocation (POST) complex to a pre-translocation (PRE) complex, thus giving elongation factor G a second chance to translocate the tRNAs correctly. Binds to ribosomes in a GTP-dependent manner. In Mannheimia succiniciproducens (strain KCTC 0769BP / MBEL55E), this protein is Elongation factor 4.